The chain runs to 1146 residues: Cell division cycle and apoptosis regulator protein 1 (1146 aa).

Residues methionine 1–glutamine 246 form an interaction with AR region. The tract at residues glutamine 200–serine 657 is interaction with GATA2. The interval isoleucine 282–arginine 351 is disordered. 2 stretches are compositionally biased toward basic and acidic residues: residues arginine 290 to proline 331 and glutamate 338 to proline 349. Serine 453 is subject to Phosphoserine. A coiled-coil region spans residues lysine 591–aspartate 615. Positions glutamine 599–alanine 635 are disordered. The span at glutamate 608–glutamate 618 shows a compositional bias: acidic residues. Threonine 624 carries the post-translational modification Phosphothreonine. The SAP domain maps to proline 633–leucine 667. Lysine 634 participates in a covalent cross-link: Glycyl lysine isopeptide (Lys-Gly) (interchain with G-Cter in ubiquitin). Residues aspartate 640–valine 1146 are interaction with GATA1. Threonine 664 bears the Phosphothreonine mark. 4 stretches are compositionally biased toward basic and acidic residues: residues glutamate 671–lysine 684, aspartate 691–arginine 716, lysine 793–glutamate 814, and serine 829–serine 852. Disordered regions lie at residues glutamate 671 to arginine 716 and lysine 793 to proline 912. Phosphoserine is present on residues serine 682 and serine 694. Over residues lysine 853 to glutamate 884 the composition is skewed to acidic residues. A Phosphothreonine modification is found at threonine 858. Positions glutamate 885 to proline 912 are enriched in basic and acidic residues. Lysine 1008 participates in a covalent cross-link: Glycyl lysine isopeptide (Lys-Gly) (interchain with G-Cter in SUMO1); alternate. Lysine 1008 participates in a covalent cross-link: Glycyl lysine isopeptide (Lys-Gly) (interchain with G-Cter in SUMO2); alternate. Positions aspartate 1029–threonine 1110 form a coiled coil. Residues lysine 1063 and lysine 1131 each participate in a glycyl lysine isopeptide (Lys-Gly) (interchain with G-Cter in SUMO2) cross-link.

In terms of assembly, directly interacts with ESR1, NR3C1 and p53/TP53. Interacts (via N-terminus) with CALCOCO1. Interacts with MED1 and GATA1. Interacts with AR and GATA2.

The protein localises to the cytoplasm. Its subcellular location is the perinuclear region. Associates with components of the Mediator and p160 coactivator complexes that play a role as intermediaries transducing regulatory signals from upstream transcriptional activator proteins to basal transcription machinery at the core promoter. Recruited to endogenous nuclear receptor target genes in response to the appropriate hormone. Also functions as a p53 coactivator. May thus play an important role in transcriptional regulation. May be involved in apoptosis signaling in the presence of the retinoid CD437. Apoptosis induction involves sequestration of 14-3-3 protein(s) and mediated altered expression of multiple cell cycle regulatory genes including MYC, CCNB1 and CDKN1A. Plays a role in cell cycle progression and/or cell proliferation. In association with CALCOCO1 enhances GATA1- and MED1-mediated transcriptional activation from the gamma-globin promoter during erythroid differentiation of K562 erythroleukemia cells. Can act as a both a coactivator and corepressor of AR-mediated transcription. Contributes to chromatin looping and AR transcription complex assembly by stabilizing AR-GATA2 association on chromatin and facilitating MED1 and RNA polymerase II recruitment to AR-binding sites. May play an important role in the growth and tumorigenesis of prostate cancer cells. The polypeptide is Cell division cycle and apoptosis regulator protein 1 (Ccar1) (Mus musculus (Mouse)).